A 184-amino-acid chain; its full sequence is NADH-quinone oxidoreductase subunit B (184 aa).

Cys37, Cys38, Cys103, and Cys132 together coordinate [4Fe-4S] cluster.

The protein belongs to the complex I 20 kDa subunit family. In terms of assembly, NDH-1 is composed of 14 different subunits. Subunits NuoB, C, D, E, F, and G constitute the peripheral sector of the complex. The cofactor is [4Fe-4S] cluster.

The protein localises to the cell membrane. It carries out the reaction a quinone + NADH + 5 H(+)(in) = a quinol + NAD(+) + 4 H(+)(out). NDH-1 shuttles electrons from NADH, via FMN and iron-sulfur (Fe-S) centers, to quinones in the respiratory chain. The immediate electron acceptor for the enzyme in this species is believed to be a menaquinone. Couples the redox reaction to proton translocation (for every two electrons transferred, four hydrogen ions are translocated across the cytoplasmic membrane), and thus conserves the redox energy in a proton gradient. This is NADH-quinone oxidoreductase subunit B from Mycolicibacterium gilvum (strain PYR-GCK) (Mycobacterium gilvum (strain PYR-GCK)).